Here is a 423-residue protein sequence, read N- to C-terminus: Hemoglobinase (423 aa).

The signal sequence occupies residues 1 to 18; that stretch reads MFYSIFFIHILRIVLVDC. Residues 19–29 constitute a propeptide that is removed on maturation; the sequence is NEYSEENVDDR. Catalysis depends on residues histidine 145 and cysteine 186. The tract at residues 286–307 is disordered; it reads RKKASTEHDEPPMKPKDSIPSR. Positions 286–423 are excised as a propeptide; that stretch reads RKKASTEHDE…INGVIRKVCG (138 aa). Residues 289 to 305 are compositionally biased toward basic and acidic residues; sequence ASTEHDEPPMKPKDSIP.

The protein belongs to the peptidase C13 family. Gut.

The catalysed reaction is Hydrolysis of proteins and small molecule substrates at -Asn-|-Xaa- bonds.. In terms of biological role, this protease is used by the parasite for degradation of the host globin. This Schistosoma japonicum (Blood fluke) protein is Hemoglobinase (HAEM).